We begin with the raw amino-acid sequence, 726 residues long: Bromodomain-containing protein 3 (726 aa).

The tract at residues 1-35 (MSTATTVAPAGIPATPGPVNPPPPEVSNPSKPGRK) is disordered. N-acetylserine is present on S2. A compositionally biased stretch (pro residues) spans 15 to 26 (TPGPVNPPPPEV). Positions 34-140 (RKTNQLQYMQ…KIFLQKVAQM (107 aa)) constitute a Bromo 1 domain. The interval 78–80 (KNP) is acetylated histone H3 binding. 2 disordered regions span residues 149-169 (PPAPKGKGRKPAAGAQSAGTQ) and 237-305 (VKKK…AGKK). Positions 248–261 (TTTPTTSAITASRS) are enriched in low complexity. Phosphoserine is present on residues S263 and S281. In terms of domain architecture, Bromo 2 spans 306–415 (GKLSEHLRYC…DVFEMRFAKM (110 aa)). K414 is covalently cross-linked (Glycyl lysine isopeptide (Lys-Gly) (interchain with G-Cter in SUMO2)). 3 disordered regions span residues 421–462 (EAPA…RATR), 477–575 (LAAL…MSYD), and 637–726 (LQKK…SDSE). Residues 453–524 (SDSEEERATR…AEEEKKAKVA (72 aa)) are a coiled coil. Residues 487–503 (KPKKKKEKKEKEKKKKD) show a composition bias toward basic residues. Basic and acidic residues predominate over residues 504–521 (KEKEKEKHKVKAEEEKKA). The span at 523 to 540 (VAPPAKQAQQKKAPAKKA) shows a compositional bias: low complexity. Residues 562 to 644 (DSEEEEEGLP…SCLQKKQRKP (83 aa)) enclose the NET domain. A Phosphoserine modification is found at S563. Residues 645-684 (FSASGKKQAAKSKEELAQEKKKELEKRLQDVSGQLSSSKK) are a coiled coil. A compositionally biased stretch (basic and acidic residues) spans 655-673 (KSKEELAQEKKKELEKRLQ). A compositionally biased stretch (low complexity) spans 692-726 (GSAPSGGPSRLSSSSSSESGSSSSSGSSSDSSDSE).

This sequence belongs to the BET family. As to quaternary structure, interacts (via bromo domain 1) with GATA1 acetylated at 'Lys-312' and 'Lys-315'. Interacts (via bromo domain 1) with GATA2 acetylated on lysine residues. Interacts (via NET domain) with CHD4 (via KIKL motif). Interacts (via NET domain) with SMARCA4 (via KIKL motif). Interacts (via NET domain) with NSD3 (via KIKL motif). In terms of assembly, (Microbial infection) Interacts with the Integrase protein of Moloney murine leukemia virus (MLV). As to expression, ubiquitous.

Its subcellular location is the nucleus. It localises to the chromosome. Its activity is regulated as follows. Inhibited by JQ1, a thieno-triazolo-1,4-diazepine derivative, which specifically inhibits members of the BET family (BRD2, BRD3 and BRD4). The first bromo domain is inhibited by GSK778 (iBET-BD1), which specifically inhibits the first bromo domain of members of the BET family (BRD2, BRD3 and BRD4). The second bromo domain is inhibited by ABBV-744, which specifically inhibits the second bromo domain of members of the BET family (BRD2, BRD3 and BRD4). The second bromo domain is inhibited by GSK046 (iBET-BD2), which specifically inhibits the second bromo domain of members of the BET family (BRD2, BRD3 and BRD4). Its function is as follows. Chromatin reader that recognizes and binds acetylated histones, thereby controlling gene expression and remodeling chromatin structures. Recruits transcription factors and coactivators to target gene sites, and activates RNA polymerase II machinery for transcriptional elongation. In vitro, binds acetylated lysine residues on the N-terminus of histone H2A, H2B, H3 and H4. Involved in endoderm differentiation via its association with long non-coding RNA (lncRNA) DIGIT: BRD3 undergoes liquid-liquid phase separation upon binding to lncRNA DIGIT, promoting binding to histone H3 acetylated at 'Lys-18' (H3K18ac) to induce endoderm gene expression. Also binds non-histones acetylated proteins, such as GATA1 and GATA2: regulates transcription by promoting the binding of the transcription factor GATA1 to its targets. The chain is Bromodomain-containing protein 3 from Homo sapiens (Human).